A 329-amino-acid chain; its full sequence is 36 kDa antigen (329 aa).

A helical membrane pass occupies residues 11–31; that stretch reads AILTGGGALLLGLIVLFYLAY.

This sequence belongs to the membrane fusion protein (MFP) (TC 8.A.1) family.

It localises to the membrane. The polypeptide is 36 kDa antigen (Helicobacter pylori (strain J99 / ATCC 700824) (Campylobacter pylori J99)).